The chain runs to 323 residues: Beta-ketoacyl-[acyl-carrier-protein] synthase III (323 aa).

Residues cysteine 113 and histidine 250 contribute to the active site. The interval 251–255 is ACP-binding; it reads QANKR. Asparagine 280 is a catalytic residue.

Belongs to the thiolase-like superfamily. FabH family. Homodimer.

Its subcellular location is the cytoplasm. The catalysed reaction is malonyl-[ACP] + acetyl-CoA + H(+) = 3-oxobutanoyl-[ACP] + CO2 + CoA. Its pathway is lipid metabolism; fatty acid biosynthesis. Functionally, catalyzes the condensation reaction of fatty acid synthesis by the addition to an acyl acceptor of two carbons from malonyl-ACP. Catalyzes the first condensation reaction which initiates fatty acid synthesis and may therefore play a role in governing the total rate of fatty acid production. Possesses both acetoacetyl-ACP synthase and acetyl transacylase activities. Its substrate specificity determines the biosynthesis of branched-chain and/or straight-chain of fatty acids. The sequence is that of Beta-ketoacyl-[acyl-carrier-protein] synthase III from Brucella anthropi (strain ATCC 49188 / DSM 6882 / CCUG 24695 / JCM 21032 / LMG 3331 / NBRC 15819 / NCTC 12168 / Alc 37) (Ochrobactrum anthropi).